A 247-amino-acid polypeptide reads, in one-letter code: UDP-2,3-diacylglucosamine hydrolase (247 aa).

The Mn(2+) site is built by Asp8, His10, Asp41, Asn79, and His114. 79-80 (NR) serves as a coordination point for substrate. Substrate contacts are provided by Asp122, Ser160, Asp171, Gln174, and His202. Mn(2+)-binding residues include His202 and His204.

The protein belongs to the LpxH family. The cofactor is Mn(2+).

The protein localises to the cell inner membrane. The enzyme catalyses UDP-2-N,3-O-bis[(3R)-3-hydroxytetradecanoyl]-alpha-D-glucosamine + H2O = 2-N,3-O-bis[(3R)-3-hydroxytetradecanoyl]-alpha-D-glucosaminyl 1-phosphate + UMP + 2 H(+). It participates in glycolipid biosynthesis; lipid IV(A) biosynthesis; lipid IV(A) from (3R)-3-hydroxytetradecanoyl-[acyl-carrier-protein] and UDP-N-acetyl-alpha-D-glucosamine: step 4/6. Its function is as follows. Hydrolyzes the pyrophosphate bond of UDP-2,3-diacylglucosamine to yield 2,3-diacylglucosamine 1-phosphate (lipid X) and UMP by catalyzing the attack of water at the alpha-P atom. Involved in the biosynthesis of lipid A, a phosphorylated glycolipid that anchors the lipopolysaccharide to the outer membrane of the cell. The polypeptide is UDP-2,3-diacylglucosamine hydrolase (Xanthomonas campestris pv. campestris (strain 8004)).